A 477-amino-acid polypeptide reads, in one-letter code: ATP synthase subunit beta (477 aa).

Residue 163-170 coordinates ATP; the sequence is GGAGVGKT.

This sequence belongs to the ATPase alpha/beta chains family. In terms of assembly, F-type ATPases have 2 components, CF(1) - the catalytic core - and CF(0) - the membrane proton channel. CF(1) has five subunits: alpha(3), beta(3), gamma(1), delta(1), epsilon(1). CF(0) has four main subunits: a(1), b(1), b'(1) and c(9-12).

The protein localises to the cellular thylakoid membrane. The enzyme catalyses ATP + H2O + 4 H(+)(in) = ADP + phosphate + 5 H(+)(out). Produces ATP from ADP in the presence of a proton gradient across the membrane. The catalytic sites are hosted primarily by the beta subunits. The protein is ATP synthase subunit beta of Synechococcus sp. (strain JA-2-3B'a(2-13)) (Cyanobacteria bacterium Yellowstone B-Prime).